A 162-amino-acid chain; its full sequence is Protein archease (162 aa).

Ca(2+) contacts are provided by D34, D161, and I162.

This sequence belongs to the archease family. As to quaternary structure, component of the tRNA-splicing ligase complex.

Component of the tRNA-splicing ligase complex required to facilitate the enzymatic turnover of catalytic subunit RTCB. Together with ddx1, acts by facilitating the guanylylation of RTCB, a key intermediate step in tRNA ligation. This Ictalurus punctatus (Channel catfish) protein is Protein archease.